The primary structure comprises 81 residues: YcgL domain-containing protein Tgr7_3126 (81 aa).

A YcgL domain is found at 1–81 (MQVYVYKSRR…QMPPQNERPL (81 aa)).

This is YcgL domain-containing protein Tgr7_3126 from Thioalkalivibrio sulfidiphilus (strain HL-EbGR7).